We begin with the raw amino-acid sequence, 71 residues long: Large ribosomal subunit protein bL31 (71 aa).

C16, C18, C38, and C41 together coordinate Zn(2+).

It belongs to the bacterial ribosomal protein bL31 family. Type A subfamily. In terms of assembly, part of the 50S ribosomal subunit. Zn(2+) serves as cofactor.

Its function is as follows. Binds the 23S rRNA. This Chromobacterium violaceum (strain ATCC 12472 / DSM 30191 / JCM 1249 / CCUG 213 / NBRC 12614 / NCIMB 9131 / NCTC 9757 / MK) protein is Large ribosomal subunit protein bL31.